Consider the following 357-residue polypeptide: Protein RecA (357 aa).

Residue 73–80 participates in ATP binding; sequence GPESSGKT.

This sequence belongs to the RecA family.

It localises to the cytoplasm. Functionally, can catalyze the hydrolysis of ATP in the presence of single-stranded DNA, the ATP-dependent uptake of single-stranded DNA by duplex DNA, and the ATP-dependent hybridization of homologous single-stranded DNAs. It interacts with LexA causing its activation and leading to its autocatalytic cleavage. This chain is Protein RecA, found in Methylibium petroleiphilum (strain ATCC BAA-1232 / LMG 22953 / PM1).